The primary structure comprises 316 residues: Pseudouridine-5'-phosphate glycosidase (316 aa).

The active-site Proton donor is the Glu31. Positions 92 and 112 each coordinate substrate. Residue Asp144 coordinates Mn(2+). 146–148 (SAD) lines the substrate pocket. Lys165 (nucleophile) is an active-site residue.

Belongs to the pseudouridine-5'-phosphate glycosidase family. Homotrimer. Mn(2+) is required as a cofactor.

It carries out the reaction D-ribose 5-phosphate + uracil = psi-UMP + H2O. Its function is as follows. Catalyzes the reversible cleavage of pseudouridine 5'-phosphate (PsiMP) to ribose 5-phosphate and uracil. Functions biologically in the cleavage direction, as part of a pseudouridine degradation pathway. Part of an operon that could be involved in the biosynthesis of the blue pigment indigoidine, which is implicated in pathogenicity and protection from oxidative stress. This Dickeya dadantii (strain 3937) (Erwinia chrysanthemi (strain 3937)) protein is Pseudouridine-5'-phosphate glycosidase.